We begin with the raw amino-acid sequence, 388 residues long: Succinate--CoA ligase [ADP-forming] subunit beta (388 aa).

The region spanning 9-244 is the ATP-grasp domain; sequence KQLFAEYGLP…PSQEDSREAH (236 aa). Residues Lys46, 53–55, Glu99, Thr102, and Glu107 each bind ATP; that span reads GRG. 2 residues coordinate Mg(2+): Asn199 and Asp213. Residues Asn264 and 321 to 323 contribute to the substrate site; that span reads GIV.

The protein belongs to the succinate/malate CoA ligase beta subunit family. In terms of assembly, heterotetramer of two alpha and two beta subunits. Mg(2+) serves as cofactor.

It carries out the reaction succinate + ATP + CoA = succinyl-CoA + ADP + phosphate. The enzyme catalyses GTP + succinate + CoA = succinyl-CoA + GDP + phosphate. The protein operates within carbohydrate metabolism; tricarboxylic acid cycle; succinate from succinyl-CoA (ligase route): step 1/1. Its function is as follows. Succinyl-CoA synthetase functions in the citric acid cycle (TCA), coupling the hydrolysis of succinyl-CoA to the synthesis of either ATP or GTP and thus represents the only step of substrate-level phosphorylation in the TCA. The beta subunit provides nucleotide specificity of the enzyme and binds the substrate succinate, while the binding sites for coenzyme A and phosphate are found in the alpha subunit. The polypeptide is Succinate--CoA ligase [ADP-forming] subunit beta (Pseudoalteromonas translucida (strain TAC 125)).